The chain runs to 452 residues: Phosphoglucosamine mutase (452 aa).

The active-site Phosphoserine intermediate is the serine 88. Residues serine 88, aspartate 234, aspartate 236, and aspartate 238 each coordinate Mg(2+). Serine 88 is subject to Phosphoserine.

The protein belongs to the phosphohexose mutase family. The cofactor is Mg(2+). Activated by phosphorylation.

It catalyses the reaction alpha-D-glucosamine 1-phosphate = D-glucosamine 6-phosphate. Its function is as follows. Catalyzes the conversion of glucosamine-6-phosphate to glucosamine-1-phosphate. The sequence is that of Phosphoglucosamine mutase from Methanococcus aeolicus (strain ATCC BAA-1280 / DSM 17508 / OCM 812 / Nankai-3).